Reading from the N-terminus, the 258-residue chain is DNA repair protein RecO (258 aa).

Belongs to the RecO family.

In terms of biological role, involved in DNA repair and RecF pathway recombination. The polypeptide is DNA repair protein RecO (Lactiplantibacillus plantarum (strain ATCC BAA-793 / NCIMB 8826 / WCFS1) (Lactobacillus plantarum)).